The chain runs to 651 residues: PTS system sucrose-specific EIIBCA component (651 aa).

Residues 3 to 86 (HQEVADRVLN…IVKTGLKEVT (84 aa)) enclose the PTS EIIB type-1 domain. C25 serves as the catalytic Phosphocysteine intermediate; for EIIB activity. Helical transmembrane passes span 109-129 (VLSDIFIPIVPALVAGGLLMA), 158-178 (MINAMASAPFTFLPILLGFSA), 182-202 (FGGNPYLGATMGMIMVLPSLV), 204-224 (GYSVATTMAAGKMVYWNVFGL), 226-246 (VAQAGYQGQVLPVLGVAFILA), 264-284 (FTPMFAIVITGFLTFTIVGPV), 303-323 (TGWIGMGIFGLLYSAIVITGL), 345-365 (FIFPVASMANIGQGAATLAIF), 404-424 (FVFAAIASGIASAFLGLFHVL), and 444-464 (IPAFMLSAVISFVVAFIPTFI). The region spanning 121–481 (LVAGGLLMAL…DDRDQVKSPA (361 aa)) is the PTS EIIC type-1 domain. Residues 510 to 614 (DQVFSAEIMG…DPTVMLIVTN (105 aa)) enclose the PTS EIIA type-1 domain. H562 (tele-phosphohistidine intermediate; for EIIA activity) is an active-site residue.

The protein localises to the cell membrane. It catalyses the reaction N(pros)-phospho-L-histidyl-[protein](out) + sucrose = sucrose 6(G)-phosphate(in) + L-histidyl-[protein]. Functionally, the phosphoenolpyruvate-dependent sugar phosphotransferase system (sugar PTS), a major carbohydrate active transport system, catalyzes the phosphorylation of incoming sugar substrates concomitantly with their translocation across the cell membrane. This system is involved in sucrose transport. This chain is PTS system sucrose-specific EIIBCA component (scrA), found in Pediococcus pentosaceus.